A 478-amino-acid chain; its full sequence is Zinc finger and SCAN domain-containing protein 26 (478 aa).

Lys-17 participates in a covalent cross-link: Glycyl lysine isopeptide (Lys-Gly) (interchain with G-Cter in SUMO2). An SCAN box domain is found at 51-133 (CKQFRQLRYE…VVLEDLQLDL (83 aa)). Disordered stretches follow at residues 159–181 (GVQE…KGEE) and 200–226 (ESSG…AKPK). Basic and acidic residues-rich tracts occupy residues 164–181 (QVRH…KGEE) and 207–226 (EPME…AKPK). Residues 231-253 (YKCSEREQRFIQHLDLIEHASTH) form a C2H2-type 1; degenerate zinc finger. C2H2-type zinc fingers lie at residues 282 to 304 (HQCH…QKIH), 310 to 332 (YQCN…LRIH), 338 to 360 (YLCI…QRIH), 366 to 388 (CECK…QRIH), 394 to 416 (HQCN…HRIH), 422 to 444 (FKCN…VRIH), and 450 to 472 (YQCS…QRYH).

The protein localises to the nucleus. In terms of biological role, may be involved in transcriptional regulation. This Homo sapiens (Human) protein is Zinc finger and SCAN domain-containing protein 26 (ZSCAN26).